The sequence spans 330 residues: Ketol-acid reductoisomerase (NADP(+)) (330 aa).

A KARI N-terminal Rossmann domain is found at 1–182 (MKKVYYDQDA…GCTRAGVFET (182 aa)). NADP(+) is bound by residues 25–28 (YGSQ), S51, S53, and 83–86 (DQIQ). H108 is a catalytic residue. G134 serves as a coordination point for NADP(+). Residues 183 to 328 (TFKEETETDL…AELRQMMPWL (146 aa)) form the KARI C-terminal knotted domain. Residues D191, E195, E227, and E231 each contribute to the Mg(2+) site. S252 is a substrate binding site.

Belongs to the ketol-acid reductoisomerase family. It depends on Mg(2+) as a cofactor.

The catalysed reaction is (2R)-2,3-dihydroxy-3-methylbutanoate + NADP(+) = (2S)-2-acetolactate + NADPH + H(+). It catalyses the reaction (2R,3R)-2,3-dihydroxy-3-methylpentanoate + NADP(+) = (S)-2-ethyl-2-hydroxy-3-oxobutanoate + NADPH + H(+). It functions in the pathway amino-acid biosynthesis; L-isoleucine biosynthesis; L-isoleucine from 2-oxobutanoate: step 2/4. It participates in amino-acid biosynthesis; L-valine biosynthesis; L-valine from pyruvate: step 2/4. Involved in the biosynthesis of branched-chain amino acids (BCAA). Catalyzes an alkyl-migration followed by a ketol-acid reduction of (S)-2-acetolactate (S2AL) to yield (R)-2,3-dihydroxy-isovalerate. In the isomerase reaction, S2AL is rearranged via a Mg-dependent methyl migration to produce 3-hydroxy-3-methyl-2-ketobutyrate (HMKB). In the reductase reaction, this 2-ketoacid undergoes a metal-dependent reduction by NADPH to yield (R)-2,3-dihydroxy-isovalerate. The polypeptide is Ketol-acid reductoisomerase (NADP(+)) (Carboxydothermus hydrogenoformans (strain ATCC BAA-161 / DSM 6008 / Z-2901)).